We begin with the raw amino-acid sequence, 283 residues long: Acetylglutamate kinase (283 aa).

Substrate contacts are provided by residues 63–64 (GG), R85, and N178.

Belongs to the acetylglutamate kinase family. ArgB subfamily.

It localises to the cytoplasm. It catalyses the reaction N-acetyl-L-glutamate + ATP = N-acetyl-L-glutamyl 5-phosphate + ADP. It functions in the pathway amino-acid biosynthesis; L-arginine biosynthesis; N(2)-acetyl-L-ornithine from L-glutamate: step 2/4. Catalyzes the ATP-dependent phosphorylation of N-acetyl-L-glutamate. In Prochlorococcus marinus (strain MIT 9515), this protein is Acetylglutamate kinase.